A 495-amino-acid chain; its full sequence is Galactose-1-phosphate uridylyltransferase (495 aa).

It belongs to the galactose-1-phosphate uridylyltransferase type 2 family.

The protein localises to the cytoplasm. The enzyme catalyses alpha-D-galactose 1-phosphate + UDP-alpha-D-glucose = alpha-D-glucose 1-phosphate + UDP-alpha-D-galactose. Its pathway is carbohydrate metabolism; galactose metabolism. In Ligilactobacillus salivarius (strain UCC118) (Lactobacillus salivarius), this protein is Galactose-1-phosphate uridylyltransferase.